Here is a 223-residue protein sequence, read N- to C-terminus: Ribonuclease 3 (223 aa).

Positions 3–125 (LERLQKKLGY…IIAAVYLDAG (123 aa)) constitute an RNase III domain. A Mg(2+)-binding site is contributed by glutamate 38. Aspartate 42 is a catalytic residue. Positions 111 and 114 each coordinate Mg(2+). Glutamate 114 is an active-site residue. A DRBM domain is found at 152–222 (DPKTRLQEYL…ALQVIKVLGI (71 aa)).

It belongs to the ribonuclease III family. Homodimer. The cofactor is Mg(2+).

The protein resides in the cytoplasm. It catalyses the reaction Endonucleolytic cleavage to 5'-phosphomonoester.. Digests double-stranded RNA. Involved in the processing of primary rRNA transcript to yield the immediate precursors to the large and small rRNAs (23S and 16S). Processes some mRNAs, and tRNAs when they are encoded in the rRNA operon. Processes pre-crRNA and tracrRNA of type II CRISPR loci if present in the organism. The polypeptide is Ribonuclease 3 (Glaesserella parasuis serovar 5 (strain SH0165) (Haemophilus parasuis)).